Reading from the N-terminus, the 391-residue chain is Phosphoglycerate kinase (391 aa).

Substrate-binding positions include 16-18 (DLN), Arg-31, 54-57 (HLGR), Arg-108, and Arg-141. ATP-binding positions include Lys-192, Glu-314, and 340–343 (GGDT).

It belongs to the phosphoglycerate kinase family. Monomer.

The protein resides in the cytoplasm. The enzyme catalyses (2R)-3-phosphoglycerate + ATP = (2R)-3-phospho-glyceroyl phosphate + ADP. It functions in the pathway carbohydrate degradation; glycolysis; pyruvate from D-glyceraldehyde 3-phosphate: step 2/5. In Coxiella burnetii (strain RSA 493 / Nine Mile phase I), this protein is Phosphoglycerate kinase.